Reading from the N-terminus, the 110-residue chain is Replication initiation control protein YabA (110 aa).

The Zn(2+) site is built by H84, C86, C100, and C103.

Belongs to the YabA family. Homotetramer. Interacts with both DnaA and DnaN, acting as a bridge between these two proteins. The cofactor is Zn(2+).

It localises to the cytoplasm. Its subcellular location is the nucleoid. Its function is as follows. Involved in control of chromosome replication initiation. Inhibits the cooperative binding of DnaA to the oriC region, thus negatively regulating initiation of chromosome replication. Inhibits the ability of DnaA-ATP to form a helix on DNA; does not disassemble preformed DnaA-DNA helices. Decreases the residence time of DnaA on the chromosome at its binding sites (oriC, replication forks and promoter-binding sites). Tethers DnaA to the replication machinery via the DNA polymerase beta sliding clamp subunit (dnaN). Associates with oriC and other DnaA targets on the chromosome in a DnaA-dependent manner. This Streptococcus mutans serotype c (strain ATCC 700610 / UA159) protein is Replication initiation control protein YabA.